A 95-amino-acid polypeptide reads, in one-letter code: Protein TusB (95 aa).

It belongs to the DsrH/TusB family. In terms of assembly, heterohexamer, formed by a dimer of trimers. The hexameric TusBCD complex contains 2 copies each of TusB, TusC and TusD. The TusBCD complex interacts with TusE.

It localises to the cytoplasm. Part of a sulfur-relay system required for 2-thiolation of 5-methylaminomethyl-2-thiouridine (mnm(5)s(2)U) at tRNA wobble positions. This chain is Protein TusB, found in Escherichia coli O81 (strain ED1a).